The following is a 1098-amino-acid chain: PAN2-PAN3 deadenylation complex catalytic subunit PAN2 (1098 aa).

4 WD repeats span residues 19-58 (ASKD…PFQL), 150-190 (TGFD…SVKS), 253-293 (PFPN…KLNV), and 300-338 (PASP…NFVN). Positions 340–466 (PAPLEEQDIP…SIFHLKSPTS (127 aa)) are linker. The tract at residues 417–442 (RNISQPYQSLREPPGSNSNAPRFISE) is disordered. In terms of domain architecture, USP spans 466 to 839 (SVPHCYSRLQ…KPVIIVYSEP (374 aa)). Residues 894-1067 (IAIDAEFVVS…EDAYTALMLF (174 aa)) form the Exonuclease domain. A divalent metal cation-binding residues include Asp-897, Glu-899, Asp-1006, and Asp-1059.

The protein belongs to the peptidase C19 family. PAN2 subfamily. As to quaternary structure, forms a heterotrimer with an asymmetric homodimer of the regulatory subunit PAN3 to form the poly(A)-nuclease (PAN) deadenylation complex. Requires a divalent metal cation as cofactor.

It is found in the cytoplasm. The enzyme catalyses Exonucleolytic cleavage of poly(A) to 5'-AMP.. With respect to regulation, positively regulated by the regulatory subunit PAN3. Functionally, catalytic subunit of the poly(A)-nuclease (PAN) deadenylation complex, one of two cytoplasmic mRNA deadenylases involved in mRNA turnover. PAN specifically shortens poly(A) tails of RNA and the activity is stimulated by poly(A)-binding protein PAB1. PAN deadenylation is followed by rapid degradation of the shortened mRNA tails by the CCR4-NOT complex. Deadenylated mRNAs are then degraded by two alternative mechanisms, namely exosome-mediated 3'-5' exonucleolytic degradation, or deadenylation-dependent mRNA decaping and subsequent 5'-3' exonucleolytic degradation by XRN1. May also be involved in post-transcriptional maturation of mRNA poly(A) tails. The polypeptide is PAN2-PAN3 deadenylation complex catalytic subunit PAN2 (Meyerozyma guilliermondii (strain ATCC 6260 / CBS 566 / DSM 6381 / JCM 1539 / NBRC 10279 / NRRL Y-324) (Yeast)).